A 523-amino-acid polypeptide reads, in one-letter code: Spastin (523 aa).

Over 1–41 the chain is Cytoplasmic; it reads MLDKLSKHKTMFYERVKEIDQILFSQQQAKQTQLDNLSNNN. The segment at residues 42–58 is an intramembrane region (helical); sequence ASGGFFSGFMKMFSPLS. 3 stretches are compositionally biased toward low complexity: residues 57–71, 171–184, and 193–210; these read LSTP…NSNT, QQPP…QQQP, and TALR…TANN. Disordered regions lie at residues 57–77 and 129–218; these read LSTP…AISQ and GISS…LDQI. Over 59 to 523 the chain is Cytoplasmic; the sequence is TPPNSSSNNN…ESYGTFAKGI (465 aa).

The protein belongs to the AAA ATPase family. Spastin subfamily. Homohexamer. The homohexamer is stabilized by ATP-binding. The homohexamer may adopt a ring conformation through which microtubules pass prior to being severed.

It localises to the membrane. It catalyses the reaction n ATP + n H2O + a microtubule = n ADP + n phosphate + (n+1) alpha/beta tubulin heterodimers.. Functionally, ATP-dependent microtubule severing protein. Stimulates microtubule minus-end depolymerization and poleward microtubule flux in the mitotic spindle. This Naegleria gruberi (Amoeba) protein is Spastin.